The primary structure comprises 459 residues: Exodeoxyribonuclease 7 large subunit (459 aa).

Belongs to the XseA family. As to quaternary structure, heterooligomer composed of large and small subunits.

It localises to the cytoplasm. The enzyme catalyses Exonucleolytic cleavage in either 5'- to 3'- or 3'- to 5'-direction to yield nucleoside 5'-phosphates.. Functionally, bidirectionally degrades single-stranded DNA into large acid-insoluble oligonucleotides, which are then degraded further into small acid-soluble oligonucleotides. In Yersinia pestis bv. Antiqua (strain Antiqua), this protein is Exodeoxyribonuclease 7 large subunit.